The chain runs to 369 residues: MSVSGLKAELKFLASIFDKNHERFRIVSWKLDELHCQFLVPPPAPPLLTLHCNITESYPSSSPIWFVDSDDPNLTSVLERLEDSKNNNSLRQQLKWLICELCRLYNLPKHLDVEMLDQPLPTGQNGTTEEVTSEEEEEEEMAEDIEDLDHYEMKEEEPINGRKSEDEGIEKENLAILEKIRKSQRQDHLNGAVSGSVQASDRLMKELRDIYRSQSYKTGIYSVELINDSLYDWHVKLQKVDPDSPLHSDLQILKEKEGIEYILLNFSFKDNFPFDPPFVRVVLPVLSGGYVLGGGALCMELLTKQGWSSAYSIESVIMQINATLVKGKARVQFGANKNQYNLARAQQSYNSIVQIHEKNGWYTPPKEDG.

Residues 117–143 (DQPLPTGQNGTTEEVTSEEEEEEEMAE) are disordered. The span at 131–143 (VTSEEEEEEEMAE) shows a compositional bias: acidic residues. In terms of domain architecture, UBC core spans 198–362 (QASDRLMKEL…VQIHEKNGWY (165 aa)). C298 (glycyl thioester intermediate) is an active-site residue.

The protein belongs to the ubiquitin-conjugating enzyme family. In terms of processing, auto-ubiquitinated in vitro. As to expression, detected at embryo implantation sites in the luminal epithelium of pregnant endometrium. Detected at low levels in ovary and liver.

It is found in the cytoplasm. The catalysed reaction is S-ubiquitinyl-[E1 ubiquitin-activating enzyme]-L-cysteine + [E2 ubiquitin-conjugating enzyme]-L-cysteine = [E1 ubiquitin-activating enzyme]-L-cysteine + S-ubiquitinyl-[E2 ubiquitin-conjugating enzyme]-L-cysteine.. It participates in protein modification; protein ubiquitination. In terms of biological role, accepts ubiquitin from the E1 complex and catalyzes its covalent attachment to other proteins. In vitro catalyzes 'Lys-48'-linked polyubiquitination. This is Ubiquitin-conjugating enzyme E2 Q2 (UBE2Q2) from Oryctolagus cuniculus (Rabbit).